The following is a 226-amino-acid chain: Triosephosphate isomerase (226 aa).

A substrate-binding site is contributed by 13-15 (NFK). His97 functions as the Electrophile in the catalytic mechanism. Glu145 (proton acceptor) is an active-site residue. Substrate-binding positions include Ile150, Gly185, and 206 to 207 (AS).

The protein belongs to the triosephosphate isomerase family. As to quaternary structure, homotetramer; dimer of dimers.

It localises to the cytoplasm. The enzyme catalyses D-glyceraldehyde 3-phosphate = dihydroxyacetone phosphate. It functions in the pathway carbohydrate biosynthesis; gluconeogenesis. Its pathway is carbohydrate degradation; glycolysis; D-glyceraldehyde 3-phosphate from glycerone phosphate: step 1/1. In terms of biological role, involved in the gluconeogenesis. Catalyzes stereospecifically the conversion of dihydroxyacetone phosphate (DHAP) to D-glyceraldehyde-3-phosphate (G3P). The polypeptide is Triosephosphate isomerase (Methanobacterium bryantii).